Reading from the N-terminus, the 734-residue chain is Sulfate transporter (734 aa).

Over residues 1-11 (MSLKNGEQNDL) the composition is skewed to polar residues. Residues 1-38 (MSLKNGEQNDLSPKDSVKGNDQYRSPSGIHVEHEEESR) are disordered. S12 and S16 each carry phosphoserine. 2 consecutive transmembrane segments (helical) span residues 113–133 (MMSG…YSLL) and 138–158 (PIYG…LGTS). N-linked (GlcNAc...) asparagine glycans are attached at residues N194 and N204. A run of 8 helical transmembrane segments spans residues 222 to 242 (FVAG…VSVY), 247 to 267 (LLGG…VKYL), 269 to 289 (GLSL…IHIF), 292 to 312 (IHKT…VLLP), 379 to 399 (VDAI…SEMF), 415 to 435 (AIGF…SAAL), 453 to 473 (VMTA…FFSL), and 519 to 539 (LIST…CVIL). The 152-residue stretch at 563 to 714 (AYKNLQAKSG…YSVYEAMTFA (152 aa)) folds into the STAS domain.

It belongs to the SLC26A/SulP transporter (TC 2.A.53) family. N-glycosylated.

Its subcellular location is the cell membrane. The protein resides in the apical cell membrane. It catalyses the reaction oxalate(in) + sulfate(out) = oxalate(out) + sulfate(in). It carries out the reaction sulfate(out) + 2 chloride(in) = sulfate(in) + 2 chloride(out). The enzyme catalyses oxalate(out) + 2 chloride(in) = oxalate(in) + 2 chloride(out). The catalysed reaction is bromide(in) + chloride(out) = bromide(out) + chloride(in). It catalyses the reaction nitrate(in) + chloride(out) = nitrate(out) + chloride(in). It carries out the reaction iodide(in) + chloride(out) = iodide(out) + chloride(in). In terms of biological role, sulfate transporter which mediates sulfate uptake into chondrocytes in order to maintain adequate sulfation of proteoglycans which is needed for cartilage development. Mediates electroneutral anion exchange of sulfate ions for oxalate ions, sulfate and oxalate ions for chloride and/or hydroxyl ions and chloride ions for bromide, iodide and nitrate ions. The coupling of sulfate transport to both hydroxyl and chloride ions likely serves to ensure transport at both acidic pH when most sulfate uptake is mediated by sulfate-hydroxide exchange and alkaline pH when most sulfate uptake is mediated by sulfate-chloride exchange. Essential for chondrocyte proliferation, differentiation and cell size expansion. This chain is Sulfate transporter (SLC26A2), found in Ovis aries (Sheep).